Reading from the N-terminus, the 790-residue chain is Phenylalanine--tRNA ligase beta subunit (790 aa).

The 110-residue stretch at 40 to 149 folds into the tRNA-binding domain; the sequence is AEKVSGVVVG…IDAPVGTDIN (110 aa). A B5 domain is found at 402 to 479; the sequence is NKQIKINLSI…RIYGYSKLPE (78 aa). Mg(2+) contacts are provided by Asp-457, Asp-463, Glu-466, and Glu-467. Positions 698 to 789 constitute an FDX-ACB domain; that stretch reads SKYPSVSRDI…LKTKFNIEQR (92 aa).

Belongs to the phenylalanyl-tRNA synthetase beta subunit family. Type 1 subfamily. Tetramer of two alpha and two beta subunits. Mg(2+) serves as cofactor.

Its subcellular location is the cytoplasm. It catalyses the reaction tRNA(Phe) + L-phenylalanine + ATP = L-phenylalanyl-tRNA(Phe) + AMP + diphosphate + H(+). The chain is Phenylalanine--tRNA ligase beta subunit from Francisella tularensis subsp. tularensis (strain SCHU S4 / Schu 4).